The primary structure comprises 422 residues: UDP-N-acetylmuramoylalanine--D-glutamate ligase (422 aa).

ATP is bound at residue 102 to 108 (GTNGKTT).

Belongs to the MurCDEF family.

It localises to the cytoplasm. The catalysed reaction is UDP-N-acetyl-alpha-D-muramoyl-L-alanine + D-glutamate + ATP = UDP-N-acetyl-alpha-D-muramoyl-L-alanyl-D-glutamate + ADP + phosphate + H(+). The protein operates within cell wall biogenesis; peptidoglycan biosynthesis. Functionally, cell wall formation. Catalyzes the addition of glutamate to the nucleotide precursor UDP-N-acetylmuramoyl-L-alanine (UMA). In Helicobacter pylori (strain ATCC 700392 / 26695) (Campylobacter pylori), this protein is UDP-N-acetylmuramoylalanine--D-glutamate ligase.